A 334-amino-acid polypeptide reads, in one-letter code: Formamidase (334 aa).

Residues 14 to 260 form the CN hydrolase domain; it reads FLVAAIQFPV…WEIVTGEIYP (247 aa). The Proton acceptor role is filled by Glu60. The Proton donor role is filled by Lys133. Residue Cys166 is the Nucleophile of the active site.

It belongs to the carbon-nitrogen hydrolase superfamily. Aliphatic amidase family.

The enzyme catalyses formamide + H2O = formate + NH4(+). Its function is as follows. Is an aliphatic amidase with a restricted substrate specificity, as it only hydrolyzes formamide. In Helicobacter pylori (strain P12), this protein is Formamidase.